We begin with the raw amino-acid sequence, 86 residues long: Putative sodium channel toxin Ts17 (86 aa).

Positions 1–19 (MNYFIFLVVACLLTAGTEG) are cleaved as a signal peptide. The LCN-type CS-alpha/beta domain maps to 21–82 (KDGYPVEGDN…EPTKTSGRCK (62 aa)). Disulfide bonds link cysteine 31–cysteine 81, cysteine 35–cysteine 57, cysteine 43–cysteine 64, and cysteine 47–cysteine 66. Proline 83 carries the proline amide modification.

It belongs to the long (4 C-C) scorpion toxin superfamily. Sodium channel inhibitor family. Alpha subfamily. As to expression, expressed by the venom gland.

Its subcellular location is the secreted. In terms of biological role, alpha toxins bind voltage-independently at site-3 of sodium channels (Nav) and inhibit the inactivation of the activated channels, thereby blocking neuronal transmission. The protein is Putative sodium channel toxin Ts17 of Tityus serrulatus (Brazilian scorpion).